The following is an 82-amino-acid chain: MSSINYPFVTEKAMMLLDENKLQFIVDTRSNKKQIVEDVEKLYGFKVKSVRTMTTMKGTKKAILTFEDPESAHEIATRIGLM.

This sequence belongs to the universal ribosomal protein uL23 family. Part of the 50S ribosomal subunit. Contacts protein L29.

Functionally, binds to 23S rRNA. One of the proteins that surrounds the polypeptide exit tunnel on the outside of the ribosome. This Methanosarcina barkeri (strain Fusaro / DSM 804) protein is Large ribosomal subunit protein uL23.